The following is a 557-amino-acid chain: Membrane protein insertase YidC (557 aa).

A helical membrane pass occupies residues 7-27 (ILLVALAVVSYLLVLQWNQDY). Residues 42 to 77 (ASPALPETVPGDSSTSADVPTAGSGNQVPDSAASTA) form a disordered region. Positions 52–77 (GDSSTSADVPTAGSGNQVPDSAASTA) are enriched in polar residues. The next 3 helical transmembrane spans lie at 370–390 (WGWS…PLSA), 436–456 (LGGC…YWVL), and 514–534 (PIIF…YWVV).

Belongs to the OXA1/ALB3/YidC family. Type 1 subfamily. Interacts with the Sec translocase complex via SecD. Specifically interacts with transmembrane segments of nascent integral membrane proteins during membrane integration.

It localises to the cell inner membrane. Required for the insertion and/or proper folding and/or complex formation of integral membrane proteins into the membrane. Involved in integration of membrane proteins that insert both dependently and independently of the Sec translocase complex, as well as at least some lipoproteins. Aids folding of multispanning membrane proteins. This chain is Membrane protein insertase YidC, found in Azotobacter vinelandii (strain DJ / ATCC BAA-1303).